Here is a 784-residue protein sequence, read N- to C-terminus: ent-copalyl diphosphate synthase 2, chloroplastic (784 aa).

Residues 1 to 57 constitute a chloroplast transit peptide; it reads MSMTLFASVTRPGLPGPTALRFPETRHLFHSVTAFAASFSPSKSSVGSSQCNATTPP. Lys242 contributes to the substrate binding site. Mg(2+) is bound by residues Asp379 and Asp381. The DXDD motif motif lies at 379–382; the sequence is DIDD. A substrate-binding site is contributed by Lys466.

Belongs to the terpene synthase family. Mg(2+) is required as a cofactor. As to expression, present in both leaves and flowers.

It is found in the plastid. Its subcellular location is the chloroplast. It participates in plant hormone biosynthesis; gibberellin biosynthesis. Its pathway is secondary metabolite biosynthesis; terpenoid biosynthesis. Its function is as follows. Involved in the biosynthesis of labdane-type diterpenoid including marrubiin and other labdane-related furanoid diterpenoids with potential applications as anti-diabetics, analgesics or vasorelaxants. May be involved in the conversion of geranylgeranyl diphosphate (GGPP) to ent-copalyl diphosphate (ent-CPP) and 8-hydroxycopalyl diphosphate (LPP, labda-13-en-8-ol diphosphate). The chain is ent-copalyl diphosphate synthase 2, chloroplastic from Marrubium vulgare (White horehound).